The primary structure comprises 124 residues: RNA polymerase-binding protein RbpA (124 aa).

4 residues coordinate Zn(2+): C34, H38, C56, and C59. Residues 73-124 (EKKAKPARTHWDMLMERRTREELEEVLEERLAVLRSGAMNIAVHPRDSRKSA) form a sufficient for interaction with HrdB (SigA) region.

The protein belongs to the RNA polymerase-binding protein RbpA family. In terms of assembly, homodimer. Forms a complex with the RNAP, and a complex with RNAP plus principal sigma factor HrdB associated with promoter. Binds to free principal sigma factors HrdB and HrdA, probably via the sigma-2 domain, but not to 6 other sigma factors tested. Zn(2+) is required as a cofactor.

In terms of biological role, binds to RNA polymerase (RNAP), stimulating transcription from principal, but not alternative sigma factor promoters. Stimulates transcription from several principal sigma factor HrdB (SigA)-dependent promoters but not from a SigR-dependent promoter. Stimulation occurs in the presence of the transcription initiation inhibitor rifampicin (Rif). In Streptomyces coelicolor (strain ATCC BAA-471 / A3(2) / M145), this protein is RNA polymerase-binding protein RbpA.